The sequence spans 319 residues: Urease accessory protein UreD (319 aa).

Positions 254 to 273 (PDPVGSPAARRESVPAKRAE) are disordered. Over residues 262–273 (ARRESVPAKRAE) the composition is skewed to basic and acidic residues.

The protein belongs to the UreD family. UreD, UreF and UreG form a complex that acts as a GTP-hydrolysis-dependent molecular chaperone, activating the urease apoprotein by helping to assemble the nickel containing metallocenter of UreC. The UreE protein probably delivers the nickel.

Its subcellular location is the cytoplasm. In terms of biological role, required for maturation of urease via the functional incorporation of the urease nickel metallocenter. This chain is Urease accessory protein UreD, found in Frankia casuarinae (strain DSM 45818 / CECT 9043 / HFP020203 / CcI3).